A 1107-amino-acid polypeptide reads, in one-letter code: uncharacterized protein (1107 aa).

Residues 180–204 are compositionally biased toward low complexity; the sequence is SGNGSSGGNNNNNNNSLNNSNNSIG. 2 disordered regions span residues 180–251 and 501–530; these read SGNG…SGNN and LMNI…DNQM. Residues 205 to 215 show a composition bias toward gly residues; it reads SSGGNGGGGSN. The segment covering 219-237 has biased composition (polar residues); it reads PSMSPQFTSISKTNSPQII. Low complexity-rich tracts occupy residues 238–251 and 501–521; these read NTSS…SGNN and LMNI…NNND. Coiled coils occupy residues 789–816 and 940–1012; these read KKDI…IYRE and NIDH…NMLK.

This is an uncharacterized protein from Dictyostelium discoideum (Social amoeba).